Reading from the N-terminus, the 89-residue chain is Small ribosomal subunit protein uS17 (89 aa).

The protein belongs to the universal ribosomal protein uS17 family. As to quaternary structure, part of the 30S ribosomal subunit.

In terms of biological role, one of the primary rRNA binding proteins, it binds specifically to the 5'-end of 16S ribosomal RNA. In Chlorobaculum tepidum (strain ATCC 49652 / DSM 12025 / NBRC 103806 / TLS) (Chlorobium tepidum), this protein is Small ribosomal subunit protein uS17.